We begin with the raw amino-acid sequence, 52 residues long: Conotoxin Cal9.2c (52 aa).

Positions lysine 1–leucine 6 are excised as a propeptide. 3 disulfides stabilise this stretch: cysteine 14–cysteine 31, cysteine 19–cysteine 41, and cysteine 21–cysteine 46.

Expressed by the venom duct.

It localises to the secreted. Its function is as follows. Probable neurotoxin with unknown target. Possibly targets ion channels. This is Conotoxin Cal9.2c from Californiconus californicus (California cone).